The following is a 769-amino-acid chain: Non-secreted LysM effector LysM17 (769 aa).

The helical transmembrane segment at 173–193 (LPPLATAIPLAVVWASLASVI) threads the bilayer. Residues asparagine 305, asparagine 368, asparagine 423, and asparagine 452 are each glycosylated (N-linked (GlcNAc...) asparagine). 2 consecutive LysM domains span residues 498-543 (RTIQ…HVCC) and 562-610 (YSNL…KICL). 4 N-linked (GlcNAc...) asparagine glycosylation sites follow: asparagine 631, asparagine 671, asparagine 706, and asparagine 734.

It belongs to the secreted LysM effector family.

Its subcellular location is the membrane. Its function is as follows. Non-secreted LysM effector that might be involved in manipulation of host defenses for successful infection. This chain is Non-secreted LysM effector LysM17, found in Penicillium expansum (Blue mold rot fungus).